The following is a 137-amino-acid chain: Small ribosomal subunit protein uS9 (137 aa).

A compositionally biased stretch (basic and acidic residues) spans 105-117 (LKIEGHLSRDPRA). The tract at residues 105-137 (LKIEGHLSRDPRAKERRKYGLKKARKAPQFSKR) is disordered. The span at 118–137 (KERRKYGLKKARKAPQFSKR) shows a compositional bias: basic residues.

It belongs to the universal ribosomal protein uS9 family.

The sequence is that of Small ribosomal subunit protein uS9 from Prochlorococcus marinus (strain MIT 9211).